Reading from the N-terminus, the 493-residue chain is 3-octaprenyl-4-hydroxybenzoate carboxy-lyase (493 aa).

Asparagine 172 contributes to the Mn(2+) binding site. Residues 175–177, 189–191, and 194–195 each bind prenylated FMN; these read IYR, RWL, and RG. Mn(2+) is bound at residue glutamate 238. Aspartate 287 (proton donor) is an active-site residue.

It belongs to the UbiD family. In terms of assembly, homohexamer. The cofactor is prenylated FMN. Requires Mn(2+) as cofactor.

Its subcellular location is the cell membrane. The catalysed reaction is a 4-hydroxy-3-(all-trans-polyprenyl)benzoate + H(+) = a 2-(all-trans-polyprenyl)phenol + CO2. It participates in cofactor biosynthesis; ubiquinone biosynthesis. Functionally, catalyzes the decarboxylation of 3-octaprenyl-4-hydroxy benzoate to 2-octaprenylphenol, an intermediate step in ubiquinone biosynthesis. This chain is 3-octaprenyl-4-hydroxybenzoate carboxy-lyase, found in Shewanella frigidimarina (strain NCIMB 400).